Consider the following 211-residue polypeptide: GTP-binding protein ypt5 (211 aa).

21–28 (GDSAVGKS) provides a ligand contact to GTP. The Effector region motif lies at 43-51 (RESTIGAAF). GTP contacts are provided by residues 70–74 (DTAGQ) and 128–131 (NKLD). S-geranylgeranyl cysteine attachment occurs at residues cysteine 209 and cysteine 211. The residue at position 211 (cysteine 211) is a Cysteine methyl ester.

It belongs to the small GTPase superfamily. Rab family.

The protein localises to the cell membrane. Functionally, protein transport. Probably involved in vesicular traffic. The protein is GTP-binding protein ypt5 (ypt5) of Schizosaccharomyces pombe (strain 972 / ATCC 24843) (Fission yeast).